Consider the following 177-residue polypeptide: Small ribosomal subunit protein uS5 (177 aa).

Residues 19 to 82 enclose the S5 DRBM domain; it reads WQERVVQIRR…ADGKKQLVEV (64 aa).

It belongs to the universal ribosomal protein uS5 family. In terms of assembly, part of the 30S ribosomal subunit. Contacts proteins S4 and S8.

Functionally, with S4 and S12 plays an important role in translational accuracy. In terms of biological role, located at the back of the 30S subunit body where it stabilizes the conformation of the head with respect to the body. In Acaryochloris marina (strain MBIC 11017), this protein is Small ribosomal subunit protein uS5.